The following is a 216-amino-acid chain: Probable transaldolase (216 aa).

Lysine 83 acts as the Schiff-base intermediate with substrate in catalysis.

It belongs to the transaldolase family. Type 3B subfamily.

It is found in the cytoplasm. The catalysed reaction is D-sedoheptulose 7-phosphate + D-glyceraldehyde 3-phosphate = D-erythrose 4-phosphate + beta-D-fructose 6-phosphate. It participates in carbohydrate degradation; pentose phosphate pathway; D-glyceraldehyde 3-phosphate and beta-D-fructose 6-phosphate from D-ribose 5-phosphate and D-xylulose 5-phosphate (non-oxidative stage): step 2/3. Transaldolase is important for the balance of metabolites in the pentose-phosphate pathway. This chain is Probable transaldolase, found in Shouchella clausii (strain KSM-K16) (Alkalihalobacillus clausii).